The following is a 140-amino-acid chain: Methylglyoxal synthase (140 aa).

Residues 1–140 (MRSKPRIALI…DQAAADDAAP (140 aa)) enclose the MGS-like domain. Substrate contacts are provided by residues His12, Lys16, 38–41 (TGTT), and 58–59 (SG). Asp64 acts as the Proton donor/acceptor in catalysis. Residue His91 participates in substrate binding.

This sequence belongs to the methylglyoxal synthase family.

The enzyme catalyses dihydroxyacetone phosphate = methylglyoxal + phosphate. Catalyzes the formation of methylglyoxal from dihydroxyacetone phosphate. This is Methylglyoxal synthase from Cupriavidus metallidurans (strain ATCC 43123 / DSM 2839 / NBRC 102507 / CH34) (Ralstonia metallidurans).